A 505-amino-acid polypeptide reads, in one-letter code: MAKARTKFVCSACGADHAQWFGRCPKCHEYGSLQEEIVNAVSSGTNHRSLGAQKSRSSKVKTGQPQAALTFSQIRQENQGRFLSGYGELDRVLGGGIVPGALILIGGDPGIGKSTLLLQVAFQLATRLPRILYVSAEESGQQIKLRATRLGITQTVEPSQAQDGINNLAHDGNLFVLPETNLDDILRELEALQPQVAIIDSIQNLYFPALSSAPGSVSQVRECTGLLMQLAKRDHISLFIVGHVTKEGAIAGPKVLEHLVDTVLYFQGDRFASHRLLRSVKNRFGATQEIGIFEMVQSGLQEVLNPSQLFLGSREEFMSGTAITVACEGTRPLVVELQALVSPTSYASPRRSTTGVDYNRLLQVLAVLEKRLGVPLSKLDAYLSVAGGLEVEEPAVDLAMAIALVASFRDRVVDPTMIILGEIGLGGQIRPVSQLEIRLKEAAKLGFKKAIVPKGQTGIESAGIKLIPVGKVFAAIAVALPANENTTDQGNGSEAKIEEDLGKKD.

The C4-type zinc-finger motif lies at 10-27 (CSACGADHAQWFGRCPKC). 107–114 (GDPGIGKS) provides a ligand contact to ATP. Positions 281–285 (KNRFG) match the RadA KNRFG motif motif. The segment at 380-505 (DAYLSVAGGL…KIEEDLGKKD (126 aa)) is lon-protease-like. The segment at 485-505 (NTTDQGNGSEAKIEEDLGKKD) is disordered. A compositionally biased stretch (basic and acidic residues) spans 495-505 (AKIEEDLGKKD).

Belongs to the RecA family. RadA subfamily.

Functionally, DNA-dependent ATPase involved in processing of recombination intermediates, plays a role in repairing DNA breaks. Stimulates the branch migration of RecA-mediated strand transfer reactions, allowing the 3' invading strand to extend heteroduplex DNA faster. Binds ssDNA in the presence of ADP but not other nucleotides, has ATPase activity that is stimulated by ssDNA and various branched DNA structures, but inhibited by SSB. Does not have RecA's homology-searching function. The sequence is that of DNA repair protein RadA from Synechocystis sp. (strain ATCC 27184 / PCC 6803 / Kazusa).